The primary structure comprises 378 residues: GDP-mannose 3,5-epimerase 1 (378 aa).

Residues Gly-36 to Lys-62, Asp-60, and Asp-80 contribute to the NAD(+) site. Substrate-binding positions include Gly-105 and Ser-145–Cys-147. Positions 175 and 179 each coordinate NAD(+). The Proton acceptor role is filled by Tyr-175. Substrate contacts are provided by residues Asn-204, Glu-217–Ala-219, Lys-226, Gln-242–Arg-244, Arg-307, and Ser-357.

The protein belongs to the NAD(P)-dependent epimerase/dehydratase family. In terms of assembly, homodimer. It depends on NAD(+) as a cofactor.

The catalysed reaction is GDP-alpha-D-mannose = GDP-beta-L-gulose. The enzyme catalyses GDP-beta-L-gulose = GDP-beta-L-galactose. Its pathway is cofactor biosynthesis; L-ascorbate biosynthesis via GDP-alpha-D-mannose pathway; L-ascorbate from GDP-alpha-D-mannose: step 1/5. Its function is as follows. Catalyzes a reversible epimerization of GDP-D-mannose that precedes the committed step in the biosynthesis of vitamin C (L-ascorbate), resulting in the hydrolysis of the highly energetic glycosyl-pyrophosphoryl linkage. Able to catalyze 2 distinct epimerization reactions and can release both GDP-L-galactose and GDP-L-gulose from GDP-mannose. This Oryza sativa subsp. indica (Rice) protein is GDP-mannose 3,5-epimerase 1.